A 67-amino-acid polypeptide reads, in one-letter code: Kappa-conotoxin-like 2 (67 aa).

The first 26 residues, 1-26 (MMFRLTSVSCFLLVIACLNLFQVVLT), serve as a signal peptide directing secretion. Cystine bridges form between Cys-29-Cys-43, Cys-36-Cys-48, Cys-42-Cys-51, and Cys-47-Cys-55. A Phenylalanine amide modification is found at Phe-59. The propeptide occupies 63–67 (ATFQE).

Belongs to the conotoxin I2 superfamily. In terms of tissue distribution, expressed by the venom duct.

The protein resides in the secreted. Inhibits the vertebrate voltage-gated potassium channels Kv1.1/KCNA1 and Kv1.3/KCNA3. The polypeptide is Kappa-conotoxin-like 2 (Conus vexillum (Flag cone)).